The chain runs to 130 residues: Holo-[acyl-carrier-protein] synthase (130 aa).

Mg(2+)-binding residues include Asp-9 and Glu-58.

It belongs to the P-Pant transferase superfamily. AcpS family. It depends on Mg(2+) as a cofactor.

It localises to the cytoplasm. It catalyses the reaction apo-[ACP] + CoA = holo-[ACP] + adenosine 3',5'-bisphosphate + H(+). Functionally, transfers the 4'-phosphopantetheine moiety from coenzyme A to a Ser of acyl-carrier-protein. The protein is Holo-[acyl-carrier-protein] synthase of Mycobacterium sp. (strain JLS).